A 499-amino-acid polypeptide reads, in one-letter code: Nuclear receptor-binding protein 2 (499 aa).

Residues 1–31 (MAAPEPAPRRGREREREDESEDESDILEESP) are disordered. Residues 7–17 (APRRGRERERE) show a composition bias toward basic and acidic residues. Residues 18 to 28 (DESEDESDILE) are compositionally biased toward acidic residues. In terms of domain architecture, Protein kinase spans 36 to 304 (QKRREQVNQG…AHNLLFHRVL (269 aa)). The segment at 396–416 (APPPEEAQKAKTPTPEPFDSE) is disordered. Thr407 and Thr409 each carry phosphothreonine.

Belongs to the protein kinase superfamily. Ser/Thr protein kinase family. In terms of tissue distribution, expressed in Purkinje cells of the cerebellum and neurons in the CA3 region of the hippocampus. Also detected in non-neural tissues including mesenchymal layer adjacent to epithelium in developing bronchi of the lung, the epithelium of the stomach as well as cells in the liver.

The protein resides in the cytoplasm. May regulate apoptosis of neural progenitor cells during their differentiation. In Mus musculus (Mouse), this protein is Nuclear receptor-binding protein 2.